A 421-amino-acid polypeptide reads, in one-letter code: Adenylosuccinate synthetase (421 aa).

Residues 11–17 (GDEGKGK) and 39–41 (GHT) each bind GTP. The active-site Proton acceptor is the D12. Residues D12 and G39 each contribute to the Mg(2+) site. Residues 12–15 (DEGK), 37–40 (NAGH), T124, R138, Q220, T235, and R299 each bind IMP. The active-site Proton donor is the H40. 295–301 (TTTGRPR) lines the substrate pocket. GTP-binding positions include R301, 327 to 329 (KLD), and 409 to 411 (SVG).

Belongs to the adenylosuccinate synthetase family. In terms of assembly, homodimer. Mg(2+) is required as a cofactor.

The protein resides in the cytoplasm. The enzyme catalyses IMP + L-aspartate + GTP = N(6)-(1,2-dicarboxyethyl)-AMP + GDP + phosphate + 2 H(+). It participates in purine metabolism; AMP biosynthesis via de novo pathway; AMP from IMP: step 1/2. Functionally, plays an important role in the de novo pathway of purine nucleotide biosynthesis. Catalyzes the first committed step in the biosynthesis of AMP from IMP. This Methanothrix thermoacetophila (strain DSM 6194 / JCM 14653 / NBRC 101360 / PT) (Methanosaeta thermophila) protein is Adenylosuccinate synthetase.